The sequence spans 102 residues: uncharacterized protein (102 aa).

Helical transmembrane passes span 21–43 (FSSSALVGIAPLTAYSALVTPVF) and 58–80 (SFAVNTPFKSCWCVIVMCSYFFC).

Its subcellular location is the membrane. This is an uncharacterized protein from Saccharomyces cerevisiae (strain ATCC 204508 / S288c) (Baker's yeast).